A 1395-amino-acid polypeptide reads, in one-letter code: DNA polymerase II large subunit (1395 aa).

2 disordered regions span residues 279–320 and 657–704; these read IGKD…PRVE and GNRM…MSDT. Acidic residues predominate over residues 283–312; that stretch reads EADEGDSAEDANGDDAGEGADDDGGDEADE. Basic and acidic residues-rich tracts occupy residues 661 to 671 and 690 to 700; these read GRPEKSERRDL and DVAKATKHADD.

Belongs to the archaeal DNA polymerase II family. As to quaternary structure, heterodimer of a large subunit and a small subunit. Post-translationally, this protein undergoes a protein self splicing that involves a post-translational excision of the intervening region (intein) followed by peptide ligation.

The catalysed reaction is DNA(n) + a 2'-deoxyribonucleoside 5'-triphosphate = DNA(n+1) + diphosphate. It carries out the reaction Exonucleolytic cleavage in the 3'- to 5'-direction to yield nucleoside 5'-phosphates.. Functionally, possesses two activities: a DNA synthesis (polymerase) and an exonucleolytic activity that degrades single-stranded DNA in the 3'- to 5'-direction. Has a template-primer preference which is characteristic of a replicative DNA polymerase. The sequence is that of DNA polymerase II large subunit from Haloarcula marismortui (strain ATCC 43049 / DSM 3752 / JCM 8966 / VKM B-1809) (Halobacterium marismortui).